The following is a 255-amino-acid chain: Hydroxyacylglutathione hydrolase (255 aa).

Residues histidine 56, histidine 58, aspartate 60, histidine 61, histidine 114, aspartate 133, and histidine 171 each coordinate Zn(2+).

The protein belongs to the metallo-beta-lactamase superfamily. Glyoxalase II family. Monomer. Zn(2+) is required as a cofactor.

The enzyme catalyses an S-(2-hydroxyacyl)glutathione + H2O = a 2-hydroxy carboxylate + glutathione + H(+). The protein operates within secondary metabolite metabolism; methylglyoxal degradation; (R)-lactate from methylglyoxal: step 2/2. In terms of biological role, thiolesterase that catalyzes the hydrolysis of S-D-lactoyl-glutathione to form glutathione and D-lactic acid. This Fuscovulum blasticum (Rhodobacter blasticus) protein is Hydroxyacylglutathione hydrolase.